The following is a 648-amino-acid chain: Transketolase (648 aa).

A substrate-binding site is contributed by His-22. Thiamine diphosphate contacts are provided by residues His-62 and 109–111; that span reads GPL. Asp-150 contacts Mg(2+). Thiamine diphosphate-binding residues include Gly-151 and Asn-180. Mg(2+) contacts are provided by Asn-180 and Val-182. The substrate site is built by His-252, Arg-345, and Ser-372. His-252 serves as a coordination point for thiamine diphosphate. Glu-397 acts as the Proton donor in catalysis. Phe-423 contacts thiamine diphosphate. 3 residues coordinate substrate: His-447, Asp-455, and Arg-506.

This sequence belongs to the transketolase family. As to quaternary structure, homodimer. Mg(2+) serves as cofactor. It depends on Ca(2+) as a cofactor. The cofactor is Mn(2+). Requires Co(2+) as cofactor. Thiamine diphosphate is required as a cofactor.

The catalysed reaction is D-sedoheptulose 7-phosphate + D-glyceraldehyde 3-phosphate = aldehydo-D-ribose 5-phosphate + D-xylulose 5-phosphate. Its function is as follows. Catalyzes the transfer of a two-carbon ketol group from a ketose donor to an aldose acceptor, via a covalent intermediate with the cofactor thiamine pyrophosphate. This chain is Transketolase (tkt), found in Mycoplasma pneumoniae (strain ATCC 29342 / M129 / Subtype 1) (Mycoplasmoides pneumoniae).